We begin with the raw amino-acid sequence, 448 residues long: Maltoporin (448 aa).

The signal sequence occupies residues 1 to 25 (MMITLRKLPLAVAVMAGIFAAQASA).

It belongs to the porin LamB (TC 1.B.3) family. In terms of assembly, homotrimer formed of three 18-stranded antiparallel beta-barrels, containing three independent channels.

The protein localises to the cell outer membrane. It catalyses the reaction beta-maltose(in) = beta-maltose(out). Its function is as follows. Involved in the transport of maltose and maltodextrins. This is Maltoporin from Cronobacter sakazakii (strain ATCC BAA-894) (Enterobacter sakazakii).